The primary structure comprises 354 residues: Replication-associated protein (354 aa).

The 104-residue stretch at Ser11 to Phe114 folds into the CRESS-DNA virus Rep endonuclease domain. The RCR-1 signature appears at Phe18–Tyr21. A divalent metal cation contacts are provided by Glu52 and His62. The RCR-2 motif lies at Cys60–Ile65. Catalysis depends on Tyr100, which acts as the For DNA cleavage activity. The RCR-3 motif lies at Tyr100 to Lys103. Glu104 contributes to the a divalent metal cation binding site. The interval Ser175–Phe187 is oligomerization. Gly228 to Ser235 contributes to the ATP binding site. The segment at Val251 to Pro269 is transactivation. The short motif at Lys291–Ser302 is the Nuclear localization signal element.

It belongs to the geminiviridae Rep protein family. In terms of assembly, homooligomer. Rep binds to repeated DNA motifs (iterons). Forms the O-complex, which is a Rep-DNA complex involved in the initiation of RCR. Part of the C- and V-complexes which are RepA-Rep-DNA complexes involved in the c-sense and v-sense transcription. Requires Mg(2+) as cofactor. The cofactor is Mn(2+).

It localises to the host nucleus. Functionally, essential for the replication of viral ssDNA. The closed circular ssDNA genome is first converted to a superhelical dsDNA. Rep binds a specific region at the genome origin of replication. It introduces an endonucleolytic nick within the conserved sequence 5'-TAATATTAC-3' in the intergenic region of the genome present in all geminiviruses, thereby initiating the rolling circle replication (RCR). Following cleavage, binds covalently to the 5'-phosphate of DNA as a tyrosyl ester. The cleavage gives rise to a free 3'-OH that serves as a primer for the cellular DNA polymerase. The polymerase synthesizes the (+) strand DNA by rolling circle mechanism. After one round of replication, a Rep-catalyzed nucleotidyl transfer reaction releases a circular single-stranded virus genome, thereby terminating the replication. Displays origin-specific DNA cleavage, nucleotidyl transferase, ATPase and helicase activities. Acts as an inhibitor of C-sense gene transcription. The chain is Replication-associated protein from Maize streak virus genotype C (isolate Set) (MSV).